The primary structure comprises 308 residues: Dioxygenase peniF (308 aa).

Residues His-144 and His-225 each contribute to the Fe cation site.

The protein belongs to the PhyH family. Homodimer. Fe cation serves as cofactor.

Functionally, dioxygenase; part of the gene cluster that mediates the biosynthesis of penifulvin A, a potent insecticidal sesquiterpene that features a [5.5.5.6]dioxafenestrane ring. The first step of the pathway is performed by the sesquiterpene cyclase peniA that generates the angular triquinane scaffold silphinene via cyclization of the linear farnesyl pyrophosphate (FPP). The cytochrome P450 monooxygenase peniB and the flavin-dependent monooxygenase peniC then catalyze a series of oxidation reactions to transform silphinene into penifulvin A. The dioxygenases peniD and peniF, as well as the acetyltransferase peniE, do not seem to be involved in the biosynthesis of penifulvin A. This chain is Dioxygenase peniF, found in Penicillium patulum (Penicillium griseofulvum).